The sequence spans 380 residues: Cytoplasmic protein NCK2 (380 aa).

T2 carries the post-translational modification N-acetylthreonine. Residues 2-61 (TEEVIVIAKWDYTAQQDQELDIKKNERLWLLDDSKTWWRVRNAANRTGYVPSNYVERKNS) enclose the SH3 1 domain. Positions 79–102 (KTRRKTSARDASPTPSTDAEYPAN) are disordered. Phosphoserine is present on S90. T92 carries the phosphothreonine modification. S94 carries the phosphoserine modification. A Phosphotyrosine modification is found at Y110. SH3 domains are found at residues 111–170 (DLNI…EEVD) and 195–257 (RVLH…VLSD). Residues 285–380 (WYYGNVTRHQ…EKLYLVRALQ (96 aa)) enclose the SH2 domain.

In terms of assembly, interacts with DOCK1, LIMS1 and TGFB1I1. Part of a complex containing PPP1R15B, PP1 and NCK2. Interacts with FASLG. Interacts with AXL. Interacts with PAK1, PKN2 and SOS1. Interacts (via SH2 domain) with EGFR. Interacts (via SH2 domain) with DDR1. Interacts with IRS1. Post-translationally, phosphorylated. As to expression, ubiquitous.

Its subcellular location is the cytoplasm. The protein localises to the endoplasmic reticulum. In terms of biological role, adapter protein which associates with tyrosine-phosphorylated growth factor receptors or their cellular substrates. Maintains low levels of EIF2S1 phosphorylation by promoting its dephosphorylation by PP1. Plays a role in ELK1-dependent transcriptional activation in response to activated Ras signaling. The sequence is that of Cytoplasmic protein NCK2 (NCK2) from Homo sapiens (Human).